A 338-amino-acid polypeptide reads, in one-letter code: Putative peptide import ATP-binding protein BruAb2_0796 (338 aa).

Residues 7-263 (LDIEGLRTVF…PRHPYTMGLL (257 aa)) enclose the ABC transporter domain. Residue 43–50 (GESGSGKS) coordinates ATP.

This sequence belongs to the ABC transporter superfamily. As to quaternary structure, the complex is composed of two ATP-binding proteins (BruAb2_0796 and BruAb2_0797), two transmembrane proteins (BruAb2_0794) and a solute-binding protein (BruAb2_0792).

The protein localises to the cell inner membrane. In terms of biological role, probably part of an ABC transporter complex that could be involved in peptide import. Probably responsible for energy coupling to the transport system. The sequence is that of Putative peptide import ATP-binding protein BruAb2_0796 from Brucella abortus biovar 1 (strain 9-941).